The following is a 54-amino-acid chain: ATP synthase protein 8 (54 aa).

A helical transmembrane segment spans residues 8 to 28; it reads WWIINFFIIWTAILLTLVILV.

The protein belongs to the ATPase protein 8 family. In terms of assembly, F-type ATPases have 2 components, CF(1) - the catalytic core - and CF(0) - the membrane proton channel.

It localises to the mitochondrion membrane. Functionally, mitochondrial membrane ATP synthase (F(1)F(0) ATP synthase or Complex V) produces ATP from ADP in the presence of a proton gradient across the membrane which is generated by electron transport complexes of the respiratory chain. F-type ATPases consist of two structural domains, F(1) - containing the extramembraneous catalytic core and F(0) - containing the membrane proton channel, linked together by a central stalk and a peripheral stalk. During catalysis, ATP synthesis in the catalytic domain of F(1) is coupled via a rotary mechanism of the central stalk subunits to proton translocation. Part of the complex F(0) domain. Minor subunit located with subunit a in the membrane. In Paracentrotus lividus (Common sea urchin), this protein is ATP synthase protein 8 (MT-ATP8).